Reading from the N-terminus, the 1498-residue chain is DNA-directed RNA polymerase subunit beta' (1498 aa).

Zn(2+) is bound by residues Cys-67, Cys-69, Cys-82, and Cys-85. The Mg(2+) site is built by Asp-499, Asp-501, and Asp-503. Zn(2+)-binding residues include Cys-867, Cys-943, Cys-950, and Cys-953.

Belongs to the RNA polymerase beta' chain family. As to quaternary structure, the RNAP catalytic core consists of 2 alpha, 1 beta, 1 beta' and 1 omega subunit. When a sigma factor is associated with the core the holoenzyme is formed, which can initiate transcription. Mg(2+) serves as cofactor. Zn(2+) is required as a cofactor.

The enzyme catalyses RNA(n) + a ribonucleoside 5'-triphosphate = RNA(n+1) + diphosphate. Functionally, DNA-dependent RNA polymerase catalyzes the transcription of DNA into RNA using the four ribonucleoside triphosphates as substrates. This chain is DNA-directed RNA polymerase subunit beta', found in Chlorobium phaeobacteroides (strain BS1).